Reading from the N-terminus, the 949-residue chain is RNA polymerase-associated protein RapA (949 aa).

The Helicase ATP-binding domain maps to 164-332 (EVADRIAPRV…FARLRLLDPN (169 aa)). An ATP-binding site is contributed by 177–184 (DEVGLGKT). The short motif at 278–281 (DEAH) is the DEAH box element. The 155-residue stretch at 474 to 628 (RVEWLIDQLK…TCPTGNALQH (155 aa)) folds into the Helicase C-terminal domain.

This sequence belongs to the SNF2/RAD54 helicase family. RapA subfamily. Interacts with the RNAP. Has a higher affinity for the core RNAP than for the holoenzyme. Its ATPase activity is stimulated by binding to RNAP.

Its function is as follows. Transcription regulator that activates transcription by stimulating RNA polymerase (RNAP) recycling in case of stress conditions such as supercoiled DNA or high salt concentrations. Probably acts by releasing the RNAP, when it is trapped or immobilized on tightly supercoiled DNA. Does not activate transcription on linear DNA. Probably not involved in DNA repair. This Pseudomonas fluorescens (strain ATCC BAA-477 / NRRL B-23932 / Pf-5) protein is RNA polymerase-associated protein RapA.